Consider the following 460-residue polypeptide: MLSIYNTLTKSKEVFKPLDGNKVRMYVCGMTVYDYCHLGHGRSMVAFDLVTRWLRFSGYELTYVRNITDIDDKIINRARDNGESFDALTARMIDAMHEDEARLNILKPDMEPRATDHIAGMHAMIQTLIDKGYAYAPGNGDVYYRVGKFQGYGKLSRKKIEDLRIGARIEVDESKEDPLDFVLWKGVKPGEPSWESPWGAGRPGWHIECSVMSTCCLGDTFDIHGGGSDLEFPHHENEIAQSEAATGKTYANAWLHCGMIRINGEKMSKSLNNFFTIRDVLEKYHPEVVRYLLVSSHYRSAINYSEDSLRESKAALERFYHALKGLPVAEPAGGEAFVERFSTAMNDDFGTPEACAVLFEMVREINRLRESDVTAAAGLAARLKQLASVLGVLQLEADDFLRAGAEGRVDAAQVEALIQARLAARAAKDWAESDRIRDQITAMGVLLEDGKGGTTWRLAD.

Zn(2+) is bound at residue Cys28. A 'HIGH' region motif is present at residues Met30–His40. Cys209, His234, and Glu238 together coordinate Zn(2+). The 'KMSKS' region signature appears at Lys266–Ser270. An ATP-binding site is contributed by Lys269.

Belongs to the class-I aminoacyl-tRNA synthetase family. Monomer. Zn(2+) is required as a cofactor.

It localises to the cytoplasm. The enzyme catalyses tRNA(Cys) + L-cysteine + ATP = L-cysteinyl-tRNA(Cys) + AMP + diphosphate. The polypeptide is Cysteine--tRNA ligase (Pseudomonas savastanoi pv. phaseolicola (strain 1448A / Race 6) (Pseudomonas syringae pv. phaseolicola (strain 1448A / Race 6))).